We begin with the raw amino-acid sequence, 173 residues long: RNA polymerase sigma factor YlaC (173 aa).

It belongs to the sigma-70 factor family. ECF subfamily.

In terms of biological role, sigma factors are initiation factors that promote the attachment of RNA polymerase to specific initiation sites and are then released. This sigma factor contributes to oxidative stress resistance. In Bacillus subtilis (strain 168), this protein is RNA polymerase sigma factor YlaC (ylaC).